Reading from the N-terminus, the 618-residue chain is 1-deoxy-D-xylulose-5-phosphate synthase (618 aa).

Thiamine diphosphate contacts are provided by residues histidine 72 and 113 to 115 (GHA). Residue aspartate 144 coordinates Mg(2+). Residues 145–146 (GA), asparagine 173, histidine 284, and glutamate 359 contribute to the thiamine diphosphate site. Asparagine 173 contacts Mg(2+).

It belongs to the transketolase family. DXPS subfamily. As to quaternary structure, homodimer. The cofactor is Mg(2+). It depends on thiamine diphosphate as a cofactor.

It carries out the reaction D-glyceraldehyde 3-phosphate + pyruvate + H(+) = 1-deoxy-D-xylulose 5-phosphate + CO2. The protein operates within metabolic intermediate biosynthesis; 1-deoxy-D-xylulose 5-phosphate biosynthesis; 1-deoxy-D-xylulose 5-phosphate from D-glyceraldehyde 3-phosphate and pyruvate: step 1/1. In terms of biological role, catalyzes the acyloin condensation reaction between C atoms 2 and 3 of pyruvate and glyceraldehyde 3-phosphate to yield 1-deoxy-D-xylulose-5-phosphate (DXP). This chain is 1-deoxy-D-xylulose-5-phosphate synthase, found in Dictyoglomus turgidum (strain DSM 6724 / Z-1310).